The following is a 207-amino-acid chain: MAPLAALASSMLLLLWLVAPSRACTCVPPHPQTAFCNSDLVIRAKFVGAPEVNHTTLYQRYEIKTTKMFKGFDALGHATDIRFVYTPAMESVCGYSHKSQNRSEEFLIAGQLRNGLLHITTCSFVVPWNSLSFSQRSGFTKTYAAGCDMCTVFACASIPCHLESDTHCLWTDQLLLGSDKGFQSRHLACLPQEPGLCAWQSLRPRKD.

An N-terminal signal peptide occupies residues 1–23 (MAPLAALASSMLLLLWLVAPSRA). Cysteine 24 provides a ligand contact to Zn(2+). An involved in metalloproteinase-binding region spans residues 24 to 27 (CTCV). 6 cysteine pairs are disulfide-bonded: cysteine 24–cysteine 93, cysteine 26–cysteine 122, cysteine 36–cysteine 147, cysteine 150–cysteine 197, cysteine 155–cysteine 160, and cysteine 168–cysteine 189. One can recognise an NTR domain in the interval 24-147 (CTCVPPHPQT…GFTKTYAAGC (124 aa)). N-linked (GlcNAc...) asparagine glycosylation is present at asparagine 53. The tract at residues 90–91 (ES) is involved in metalloproteinase-binding. Asparagine 101 carries an N-linked (GlcNAc...) asparagine glycan. Serine 178 bears the Phosphoserine mark.

This sequence belongs to the protease inhibitor I35 (TIMP) family. In terms of assembly, interacts with MMP1, MMP3, MMP10 and MMP13, but has only very low affinity for MMP14. Interacts with CD63; identified in a complex with CD63 and ITGB1. In terms of processing, the activity of TIMP1 is dependent on the presence of disulfide bonds. Post-translationally, N-glycosylated.

Its subcellular location is the secreted. In terms of biological role, metalloproteinase inhibitor that functions by forming one to one complexes with target metalloproteinases, such as collagenases, and irreversibly inactivates them by binding to their catalytic zinc cofactor. Acts on MMP1, MMP2, MMP3, MMP7, MMP8, MMP9, MMP10, MMP11, MMP12, MMP13 and MMP16. Does not act on MMP14. Also functions as a growth factor that regulates cell differentiation, migration and cell death and activates cellular signaling cascades via CD63 and ITGB1. Plays a role in integrin signaling. This is Metalloproteinase inhibitor 1 (TIMP1) from Oryctolagus cuniculus (Rabbit).